The sequence spans 446 residues: Oxysterols receptor LXR-beta (446 aa).

Residues 1–69 (MSSPTSSLDT…PERKRKKGPA (69 aa)) form a disordered region. Positions 1–76 (MSSPTSSLDT…GPAPKMLGHE (76 aa)) are transactivation AF-1; required for ligand-independent transactivation function. Low complexity predominate over residues 17–28 (SPQPSTSATSPT). Positions 75–152 (HELCRVCGDK…AGMREQCVLS (78 aa)) form a DNA-binding region, nuclear receptor. 2 NR C4-type zinc fingers span residues 78-98 (CRVC…CEGC) and 116-140 (CRGS…LRKC). The interval 159–201 (KRIQKQQQQQPPPPSEPAASSSGRPAASPGTSEASSQGSGEGE) is disordered. Residues 175-196 (PAASSSGRPAASPGTSEASSQG) show a composition bias toward low complexity. The transactivation AF-2; required for ligand-dependent transactivation function; mediates interaction with CCAR2 stretch occupies residues 205-446 (LTAAQELMIQ…LLSEIWDVHE (242 aa)). One can recognise an NR LBD domain in the interval 208-446 (AQELMIQQLV…LLSEIWDVHE (239 aa)). Glycyl lysine isopeptide (Lys-Gly) (interchain with G-Cter in SUMO2) cross-links involve residues K395 and K433.

Belongs to the nuclear hormone receptor family. NR1 subfamily. In terms of assembly, forms a heterodimer with RXR. Interacts with CCAR2 (via N-terminus) in a ligand-independent manner. Interacts (when sumoylated) with GPS2; interaction with GPS2 onto hepatic acute phase protein promoters prevents N-Cor corepressor complex dissociation. Interacts with ABCA12 and ABCA1; this interaction is required for ABCA1 localization to the cell surface and is necessary for its normal activity and stability. Sumoylated by SUMO2 at Lys-395 and Lys-433 during the hepatic acute phase response, leading to promote interaction with GPS2 and prevent N-Cor corepressor complex dissociation. As to expression, ubiquitous.

It localises to the nucleus. Its function is as follows. Nuclear receptor that exhibits a ligand-dependent transcriptional activation activity. Binds preferentially to double-stranded oligonucleotide direct repeats having the consensus half-site sequence 5'-AGGTCA-3' and 4-nt spacing (DR-4). Regulates cholesterol uptake through MYLIP-dependent ubiquitination of LDLR, VLDLR and LRP8; DLDLR and LRP8. Interplays functionally with RORA for the regulation of genes involved in liver metabolism. Induces LPCAT3-dependent phospholipid remodeling in endoplasmic reticulum (ER) membranes of hepatocytes, driving SREBF1 processing and lipogenesis. Via LPCAT3, triggers the incorporation of arachidonate into phosphatidylcholines of ER membranes, increasing membrane dynamics and enabling triacylglycerols transfer to nascent very low-density lipoprotein (VLDL) particles. Via LPCAT3 also counteracts lipid-induced ER stress response and inflammation, likely by modulating SRC kinase membrane compartmentalization and limiting the synthesis of lipid inflammatory mediators. Plays an anti-inflammatory role during the hepatic acute phase response by acting as a corepressor: inhibits the hepatic acute phase response by preventing dissociation of the N-Cor corepressor complex. This Mus musculus (Mouse) protein is Oxysterols receptor LXR-beta (Nr1h2).